The sequence spans 463 residues: Soluble pyridine nucleotide transhydrogenase (463 aa).

35-44 contacts FAD; sequence EKQQAVGGNC.

This sequence belongs to the class-I pyridine nucleotide-disulfide oxidoreductase family. FAD is required as a cofactor.

The protein resides in the cytoplasm. The enzyme catalyses NAD(+) + NADPH = NADH + NADP(+). Its function is as follows. Conversion of NADPH, generated by peripheral catabolic pathways, to NADH, which can enter the respiratory chain for energy generation. The protein is Soluble pyridine nucleotide transhydrogenase of Chromohalobacter salexigens (strain ATCC BAA-138 / DSM 3043 / CIP 106854 / NCIMB 13768 / 1H11).